A 301-amino-acid chain; its full sequence is MADNSSDEYEDENNKEKKKTSQLTPQRGFSENDDDDDDDDSSETDSDDDDEEHGAPLEGAYDPADYEHLPVSAEVKELFQYISRYTPQLIDLDHKLKPFIPDFIPAVGDIDAFLKVPRPDGKPDNLGLLVLDEPSTKQSDPTVLSLWLTENSKQHNITQHMKVKSLEDAEKNPKAIDTWIESISELHRSKPPATVHYTRPMPDIDTLMQEWSPEFEELLGKVSLPTAEIDCSLAEYIDMICAILDIPVYKSRIQSLHLLFSLYSEFKNSQHFKALAEGKTAFTPPSNSNSQAGDAETLTFS.

Acidic residues-rich tracts occupy residues 1-13 (MADNSSDEYEDEN) and 31-52 (ENDDDDDDDDSSETDSDDDDEE). Disordered stretches follow at residues 1–63 (MADN…AYDP) and 280–301 (TAFTPPSNSNSQAGDAETLTFS). At Thr283 the chain carries Phosphothreonine. Positions 283–301 (TPPSNSNSQAGDAETLTFS) are enriched in polar residues.

The protein belongs to the IFT46 family. As to quaternary structure, component of the IFT complex B, at least composed of IFT20, IFT22, IFT25, IFT27, IFT46, IFT52, TRAF3IP1/IFT54, IFT57, IFT74, IFT80, IFT81, and IFT88. Interacts with IFT57, IFT88 and DAW1. Interacts with ARL13B. Interacts with IFT56. Interacts with TTC25. Interacts with IFT70B.

It is found in the cytoplasm. The protein localises to the cytoskeleton. It localises to the cilium basal body. The protein resides in the cell projection. Its subcellular location is the cilium. In terms of biological role, forms part of a complex involved in intraflagellar transport (IFT), the bi-directional movement of particles required for the assembly, maintenance and functioning of primary cilia. May play a role in chondrocyte maturation and skeletogenesis. The polypeptide is Intraflagellar transport protein 46 homolog (IFT46) (Bos taurus (Bovine)).